Here is a 406-residue protein sequence, read N- to C-terminus: MISLNSIFLLSLVGLSRAAPSRSETSPDRTIKPRAACTPTAGGSSSTDDVPAIQEAITSCGDGGTIVIPADTTYYLNSVLDFKGCSNCDFQVEGLLQFTSSTDYWNGKTAMISVSDIDGLKLRSVTGSGVIDGNGQESWDKFAEDSSYKRPTLLYITGGSNIEVSGLRQKNPPNVFISVKGDTSNAQFTSLTMDATSNSDNLPKNTDAFDIGASTYVTISSVAITNDDDCVAFKPGANYVTVENVSCTGSHGISVGSLGKSSDDTVQNVYARNITMINSSKAAGIKTYPSGGDHGLSTVKNATFEDFIVDGCDYAFQIQSCYGEDDTYCEENPGDAVLEGIVVKGFTGTTSDKEDPVVANLNCGSKGTCDVTISGFEVKAPSGDAKILCGNTPSDLGVTCSSGASG.

Residues 1 to 18 (MISLNSIFLLSLVGLSRA) form the signal peptide. A disordered region spans residues 20–49 (PSRSETSPDRTIKPRAACTPTAGGSSSTDD). PbH1 repeat units lie at residues 183–213 (TSNA…DIGA), 214–235 (STYV…AFKP), 237–257 (ANYV…SVGS), 266–289 (VQNV…KTYP), 299–320 (VKNA…QIQS), and 368–390 (TCDV…ILCG). Asp-228 (proton donor) is an active-site residue. N-linked (GlcNAc...) asparagine glycosylation is present at Asn-244. Residue His-251 is part of the active site. Asn-273, Asn-278, and Asn-301 each carry an N-linked (GlcNAc...) asparagine glycan.

Belongs to the glycosyl hydrolase 28 family.

The protein resides in the secreted. In terms of biological role, pectinolytic enzyme involved in the degradation of xylogalacturonan (xga), a galacturonan backbone heavily substituted with xylose, and which is one important component of the hairy regions of pectin. Activity requires a galacturonic acid backbone substituted with xylose. In Aspergillus flavus (strain ATCC 200026 / FGSC A1120 / IAM 13836 / NRRL 3357 / JCM 12722 / SRRC 167), this protein is Probable endo-xylogalacturonan hydrolase A (xghA).